We begin with the raw amino-acid sequence, 292 residues long: THO complex subunit 4B (292 aa).

Residues M1–F50 are disordered. N-acetylserine is present on S2. Gly residues predominate over residues R23–S42. In terms of domain architecture, RRM spans T108 to T185. Residues G241 to G252 show a composition bias toward gly residues. The disordered stretch occupies residues G241–S292. The span at E280–S292 shows a compositional bias: basic and acidic residues.

The protein belongs to the ALYREF family. Interacts with RH15 and RH56.

The protein localises to the nucleus. The protein resides in the nucleoplasm. Its function is as follows. Export adapter involved in nuclear export of spliced and unspliced mRNA. The sequence is that of THO complex subunit 4B (ALY2) from Arabidopsis thaliana (Mouse-ear cress).